A 263-amino-acid polypeptide reads, in one-letter code: Methylesterase 1 (263 aa).

Serine 85 (acyl-ester intermediate) is an active-site residue. Catalysis depends on charge relay system residues aspartate 213 and histidine 241.

The protein belongs to the AB hydrolase superfamily. Methylesterase family.

It catalyses the reaction methyl (indol-3-yl)acetate + H2O = (indol-3-yl)acetate + methanol + H(+). It carries out the reaction methyl (-)-jasmonate + H2O = jasmonate + methanol + H(+). The enzyme catalyses methyl salicylate + H2O = salicylate + methanol + H(+). It participates in plant hormone biosynthesis. Its pathway is lipid metabolism; oxylipin biosynthesis. Esterase activity is down-regulated by salicylic acid (SA). Its function is as follows. Methylesterase shown to have carboxylesterase activity, methyl indole-3-acetic acid (MeIAA) esterase activity, methyl salicylate (MeSA) esterase activity and methyl jasmonate (MeJA) esterase activity in vitro. Required to convert methyl salicylate (MeSA) to salicylic acid (SA) as part of the signal transduction pathways that activate systemic acquired resistance in systemic tissue. MeSA is believed to be an inactive form that needs to be demethylated to exert a biological effect. The protein is Methylesterase 1 of Arabidopsis thaliana (Mouse-ear cress).